Here is a 453-residue protein sequence, read N- to C-terminus: Ferruginol synthase (453 aa).

Residues 15–35 (LSKKYGPLMSIHLGSLYTVIV) form a helical membrane-spanning segment. Cysteine 397 contributes to the heme binding site.

The protein belongs to the cytochrome P450 family. It depends on heme as a cofactor. Expressed in leaf glandular trichomes.

Its subcellular location is the membrane. It carries out the reaction abieta-8,11,13-triene + reduced [NADPH--hemoprotein reductase] + O2 = ferruginol + oxidized [NADPH--hemoprotein reductase] + H2O + H(+). The catalysed reaction is ferruginol + reduced [NADPH--hemoprotein reductase] + O2 = 11-hydroxyferruginol + oxidized [NADPH--hemoprotein reductase] + H2O + H(+). The enzyme catalyses miltiradiene + 2 reduced [NADPH--hemoprotein reductase] + 2 O2 = 11-oxomiltiradiene + 2 oxidized [NADPH--hemoprotein reductase] + 3 H2O + 2 H(+). The protein operates within secondary metabolite biosynthesis; terpenoid biosynthesis. Its function is as follows. Monooxygenase involved in the biosynthesis of labdane-related diterpenes natural products. Catalyzes the oxidation of abietatriene to produce ferruginol. Ferruginol is an intermediate in the biosynthesis of carnosate, a potent antioxidant. May also convert miltiradiene into 11-oxomiltiradiene. The protein is Ferruginol synthase of Salvia pomifera (Apple sage).